A 783-amino-acid polypeptide reads, in one-letter code: Cation/H(+) antiporter 10 (783 aa).

12 helical membrane passes run 31 to 51, 61 to 81, 100 to 120, 135 to 155, 175 to 195, 206 to 226, 244 to 264, 276 to 295, 300 to 322, 356 to 376, 389 to 409, and 418 to 438; these read VVFG…FFCI, IGIS…PQLF, IAAL…LMTV, VVIG…QNFF, AIVI…LLEL, ALSA…VASI, AVII…QWVI, MYIH…FVFF, ILGP…ALEA, IFFN…ACLA, LAVS…YEAV, and ATYS…PTVL.

It belongs to the monovalent cation:proton antiporter 2 (CPA2) transporter (TC 2.A.37) family. CHX (TC 2.A.37.4) subfamily. As to expression, specifically expressed in pollen.

The protein resides in the membrane. May operate as a cation/H(+) antiporter. This chain is Cation/H(+) antiporter 10 (CHX10), found in Arabidopsis thaliana (Mouse-ear cress).